The following is a 71-amino-acid chain: Beta-defensin 9 (71 aa).

The signal sequence occupies residues 1–23 (MRTLCSLLLICCLLFSYDTPVVG). 3 disulfide bridges follow: cysteine 37/cysteine 66, cysteine 44/cysteine 59, and cysteine 49/cysteine 67.

It belongs to the beta-defensin family.

The protein localises to the secreted. Its function is as follows. Has antibacterial activity. This chain is Beta-defensin 9 (Defb9), found in Rattus norvegicus (Rat).